The primary structure comprises 163 residues: uncharacterized protein (163 aa).

This is an uncharacterized protein from Caenorhabditis elegans.